The chain runs to 62 residues: MPTFHIEMFEGRSADQKRKLVEEVTRVTCETLGCAPGAVDIIIAEVKRENWATGGVLWSEQK.

Residue P2 is the Proton acceptor; via imino nitrogen of the active site.

The protein belongs to the 4-oxalocrotonate tautomerase family.

This Ralstonia nicotianae (strain ATCC BAA-1114 / GMI1000) (Ralstonia solanacearum) protein is Probable tautomerase RSc0807.